The sequence spans 735 residues: MAKDNEAIAINDAVHKLQLYMLENTTDQNQLFAARKLMSRSDYEDVVTERAIAKLCGYTLCQRFLPSDVSRRGKYRISLKDHKVYDLQETSKFCSAGCLIDSKTFSGSLQEARTLEFDSVKLNEILDLFGDSLEVKGSLDVNKDLDLSKLMIKENFGVRGEELSLEKWMGPSNAVEGYVPFDRSKSSNDSKATTQSNQEKHEMDFTSTVIMPDVNSVSKLPPQTKQASTVVESVDGKGKTVLKEQTVVPPTKKVSRFRREKEKEKKTFGVDGMGCAQEKTTVLPRKILSFCNEIEKDFKNFGFDEMGLASSAMMSDGYGVEYSVSKQPQCSMEDSLSCKLKGDLQTLDGKNTLSGSSSGSNTKGSKTKPEKSRKKIISVEYHANSYEDGEEILAAESYERHKAQDVCSSSEIVTKSCLKISGSKKLSRSVTWADQNDGRGDLCEVRNNDNAAGPSLSSNDIEDVNSLSRLALAEALATALSQAAEAVSSGNSDASDATAKAGIILLPSTHQLDEEVTEEHSEEEMTEEEPTLLKWPNKPGIPDSDLFDRDQSWFDGPPEGFNLTLSNFAVMWDSLFGWVSSSSLAYIYGKEESAHEEFLLVNGKEYPRRIIMVDGLSSEIKQTIAGCLARALPRVVTHLRLPIAISELEKGLGSLLETMSLTGAVPSFRVKEWLVIVLLFLDALSVSRIPRIAPYISNRDKILEGSGIGNEEYETMKDILLPLGRVPQFATRSGA.

The RTR1-type zinc finger occupies 33-118 (AARKLMSRSD…LQEARTLEFD (86 aa)). 4 residues coordinate Zn(2+): C56, C61, C94, and C98. Disordered stretches follow at residues 179–201 (VPFD…QEKH), 349–374 (GKNT…KSRK), and 519–538 (EHSE…WPNK). Low complexity predominate over residues 349–364 (GKNTLSGSSSGSNTKG). Residues 519–530 (EHSEEEMTEEEP) show a composition bias toward acidic residues.

Belongs to the RPAP2 family.

Its subcellular location is the nucleus. The catalysed reaction is O-phospho-L-seryl-[protein] + H2O = L-seryl-[protein] + phosphate. It catalyses the reaction O-phospho-L-threonyl-[protein] + H2O = L-threonyl-[protein] + phosphate. Functionally, putative RNA polymerase II subunit B1 C-terminal domain (CTD) phosphatase involved in RNA polymerase II transcription regulation. This is Putative RNA polymerase II subunit B1 CTD phosphatase RPAP2 homolog from Arabidopsis thaliana (Mouse-ear cress).